We begin with the raw amino-acid sequence, 694 residues long: Elongation factor G (694 aa).

In terms of domain architecture, tr-type G spans 9 to 288; the sequence is SKIRNIGIMA…VIVKWLPSPK (280 aa). GTP-binding positions include 18–25, 82–86, and 136–139; these read AHIDAGKT, DTPGH, and NKMD.

Belongs to the TRAFAC class translation factor GTPase superfamily. Classic translation factor GTPase family. EF-G/EF-2 subfamily.

It localises to the cytoplasm. Functionally, catalyzes the GTP-dependent ribosomal translocation step during translation elongation. During this step, the ribosome changes from the pre-translocational (PRE) to the post-translocational (POST) state as the newly formed A-site-bound peptidyl-tRNA and P-site-bound deacylated tRNA move to the P and E sites, respectively. Catalyzes the coordinated movement of the two tRNA molecules, the mRNA and conformational changes in the ribosome. The polypeptide is Elongation factor G (Chlamydia felis (strain Fe/C-56) (Chlamydophila felis)).